We begin with the raw amino-acid sequence, 537 residues long: Probable sterol O-acyltransferase 1 (537 aa).

The next 4 helical transmembrane spans lie at 98–118 (FRGFYVLFWLSMAAWVLQLYA), 140–160 (FFVLFSSDFLMICLSFFSYGL), 174–194 (LGYTIQTLWQGFYMVLAVYWV), and 199–219 (FPIVQCVFFTLHCAVLIMKQF). Residue Asn-250 is glycosylated (N-linked (GlcNAc...) asparagine). 2 consecutive transmembrane segments (helical) span residues 344 to 364 (FGLLALTLALVDWYFVPSAVA) and 384 to 404 (IMFPAIILYLIMFYLIFDCIL). Residues 418–424 (FYGAWWN) carry the FYXDWWN motif motif. 2 helical membrane passes run 462 to 482 (AVLLTFLISALVHEFVMLLAT) and 517 to 537 (VFFWIGMFTGPSFLCILYIVF). His-474 is a catalytic residue.

Belongs to the membrane-bound acyltransferase family. Sterol o-acyltransferase subfamily.

The protein localises to the endoplasmic reticulum membrane. In terms of biological role, sterol O-acyltransferase that catalyzes the formation of stery esters. The protein is Probable sterol O-acyltransferase 1 (are1) of Schizosaccharomyces pombe (strain 972 / ATCC 24843) (Fission yeast).